The chain runs to 70 residues: Prokaryotic ubiquitin-like protein UBact (70 aa).

Composition is skewed to basic and acidic residues over residues 1-15 (MPDQRQQERSRRKQG) and 24-50 (TRHDPPPSEQESPVRRMLRDLRERDPG). Residues 1–70 (MPDQRQQERS…RQQRREQSGE (70 aa)) form a disordered region. Glutamate 70 participates in a covalent cross-link: Isoglutamyl lysine isopeptide (Glu-Lys) (interchain with K-? in acceptor proteins).

It belongs to the ubiquitin-like protein UBact family.

In terms of biological role, may function as a protein modifier covalently attached to lysine residues of substrate proteins. This may serve to target the modified proteins for degradation by proteasomes. This is Prokaryotic ubiquitin-like protein UBact from Terrybacteria sp. (strain RIFCSPHIGHO2_01_FULL_58_15).